A 378-amino-acid polypeptide reads, in one-letter code: Histidinol-phosphate aminotransferase (378 aa).

The disordered stretch occupies residues 1–20 (MSVSAKETQRHPARPEPRPG). The segment covering 7-17 (ETQRHPARPEP) has biased composition (basic and acidic residues). Lys232 is subject to N6-(pyridoxal phosphate)lysine.

This sequence belongs to the class-II pyridoxal-phosphate-dependent aminotransferase family. Histidinol-phosphate aminotransferase subfamily. As to quaternary structure, homodimer. It depends on pyridoxal 5'-phosphate as a cofactor.

The catalysed reaction is L-histidinol phosphate + 2-oxoglutarate = 3-(imidazol-4-yl)-2-oxopropyl phosphate + L-glutamate. It participates in amino-acid biosynthesis; L-histidine biosynthesis; L-histidine from 5-phospho-alpha-D-ribose 1-diphosphate: step 7/9. This chain is Histidinol-phosphate aminotransferase, found in Azorhizobium caulinodans (strain ATCC 43989 / DSM 5975 / JCM 20966 / LMG 6465 / NBRC 14845 / NCIMB 13405 / ORS 571).